A 178-amino-acid chain; its full sequence is ATP-dependent protease subunit HslV (178 aa).

The active site involves Thr-5. Residues Ala-160, Cys-163, and Thr-166 each contribute to the Na(+) site.

The protein belongs to the peptidase T1B family. HslV subfamily. In terms of assembly, a double ring-shaped homohexamer of HslV is capped on each side by a ring-shaped HslU homohexamer. The assembly of the HslU/HslV complex is dependent on binding of ATP.

It is found in the cytoplasm. It catalyses the reaction ATP-dependent cleavage of peptide bonds with broad specificity.. With respect to regulation, allosterically activated by HslU binding. In terms of biological role, protease subunit of a proteasome-like degradation complex believed to be a general protein degrading machinery. This is ATP-dependent protease subunit HslV from Magnetococcus marinus (strain ATCC BAA-1437 / JCM 17883 / MC-1).